A 320-amino-acid chain; its full sequence is MGMVGLRDVFLVAPAYHHQNAGVISGSDHMNSNAAAAAALGVGVIPLLTAGTPQQNVEDSDINFLGNNRRWQNNNNNHETQYLHFKSTNQTTVGTSSNNSGSGSGASGTATCQDCGNQAKKECKQRRCRTCCKSRGFDCSTHVKSTWVSAARRRERQVMPTGANPTAGSSLSTSSGTKKPRIVGSQQQQQQQATSHTSTSNTPPQSFETSSSRQDGGGSREAWPGQVRAAAVFKCVRVTAVEDGDDEYAYQAVVKIGGHVFKGFLYDQGLEPKEGFPSMSDLHLGGSANNHNGVSASAPILDPPNVVYGGGGGSGGGFYS.

The tract at residues 90–110 is disordered; sequence QTTVGTSSNNSGSGSGASGTA. Residues C112, C115, C123, C128, C132, and C139 each coordinate Zn(2+). The zn(2)-C6 fungal-type; degenerate DNA-binding region spans 112–139; sequence CQDCGNQAKKECKQRRCRTCCKSRGFDC. Residues 150–223 form a disordered region; the sequence is AARRRERQVM…QDGGGSREAW (74 aa). A compositionally biased stretch (low complexity) spans 168 to 177; it reads GSSLSTSSGT. A compositionally biased stretch (polar residues) spans 193-214; that stretch reads ATSHTSTSNTPPQSFETSSSRQ. The short motif at 256–259 is the Required for homo- and heterodimerization element; the sequence is IGGH.

This sequence belongs to the SHI protein family. As to quaternary structure, homodimer. In terms of tissue distribution, restricted to lateral root primordia.

It localises to the nucleus. Its function is as follows. Transcription activator that binds DNA on 5'-ACTCTAC-3' and promotes auxin homeostasis-regulating gene expression (e.g. YUC genes), as well as genes affecting stamen development, cell expansion and timing of flowering. Synergistically with other SHI-related proteins, regulates gynoecium, stamen and leaf development in a dose-dependent manner, controlling apical-basal patterning. Promotes style and stigma formation, and influence vascular development during gynoecium development. May also have a role in the formation and/or maintenance of the shoot apical meristem (SAM). Modulates root growth. The protein is Protein LATERAL ROOT PRIMORDIUM 1 (LRP1) of Arabidopsis thaliana (Mouse-ear cress).